The sequence spans 901 residues: Probable inorganic carbon transporter subunit DabA (901 aa).

Positions 424, 426, 606, and 621 each coordinate Zn(2+).

The protein belongs to the inorganic carbon transporter (TC 9.A.2) DabA family. Forms a complex with DabB. Zn(2+) is required as a cofactor.

The protein localises to the cell membrane. In terms of biological role, part of an energy-coupled inorganic carbon pump. This chain is Probable inorganic carbon transporter subunit DabA, found in Staphylococcus aureus (strain USA300).